A 207-amino-acid chain; its full sequence is Ribonuclease HII (207 aa).

The RNase H type-2 domain maps to 10–199 (RLIAGVDEVG…VRNALLDAEL (190 aa)). Residues D16, E17, and D108 each coordinate a divalent metal cation.

It belongs to the RNase HII family. The cofactor is Mn(2+). Mg(2+) is required as a cofactor.

It is found in the cytoplasm. The catalysed reaction is Endonucleolytic cleavage to 5'-phosphomonoester.. Endonuclease that specifically degrades the RNA of RNA-DNA hybrids. The sequence is that of Ribonuclease HII from Erwinia tasmaniensis (strain DSM 17950 / CFBP 7177 / CIP 109463 / NCPPB 4357 / Et1/99).